We begin with the raw amino-acid sequence, 714 residues long: Polyribonucleotide nucleotidyltransferase (714 aa).

Mg(2+)-binding residues include aspartate 488 and aspartate 494. The KH domain occupies 555–614 (PRIEVMNIPTDKIRDVIGSGGKVIREIVEKTGAKINIEDDGTVKIASSNGKEIEAAKKWI). Positions 624–692 (GEIYEGTVVK…ERGKVRLSMK (69 aa)) constitute an S1 motif domain.

It belongs to the polyribonucleotide nucleotidyltransferase family. Mg(2+) serves as cofactor.

It localises to the cytoplasm. It carries out the reaction RNA(n+1) + phosphate = RNA(n) + a ribonucleoside 5'-diphosphate. Involved in mRNA degradation. Catalyzes the phosphorolysis of single-stranded polyribonucleotides processively in the 3'- to 5'-direction. This is Polyribonucleotide nucleotidyltransferase from Brucella abortus biovar 1 (strain 9-941).